The primary structure comprises 411 residues: MSDLLPLATYSLNVEPYTPVPAIDVTMPITVRITMAALNPEAIDEENKPSTLRIIKRNPDFEDDDFLGGDFDEDEIDEESSEEEEEEKTQKKKKSKGKKAESESEDDEEDDDEDDEFQESVLLTLSPEAQYQQSLDLTITPEEEVQFIVTGSYAISLSGNYVKHPFDTPMGVEGEDEDEDADIYDSEDYDLTPDEDEIIGDDMDDLDDEEEEEVRIEEVQEEDEEDNDGEEEQEEEEEEEQKEEVKPEPKKSKKEKKRKHEEKEEEKKAKKVKKVEFKKDLEEGPTKPKSKKEQDKHKPKSKVLEGGIVIEDRTIGDGPQAKRGARVGMRYIGKLKNGKVFDKNTSGKPFAFKLGRGEVIKGWDIGVAGMSVGGERRIIIPAPYAYGKQALPGIPANSELTFDVKLVSMKN.

Residue serine 2 is modified to N-acetylserine. Disordered regions lie at residues 54–127 (IIKR…TLSP) and 160–302 (NYVK…PKSK). Positions 61–87 (FEDDDFLGGDFDEDEIDEESSEEEEEE) are enriched in acidic residues. Residues serine 80 and serine 81 each carry the phosphoserine modification. A Phosphothreonine modification is found at threonine 89. 2 stretches are compositionally biased toward acidic residues: residues 103-118 (ESED…DEFQ) and 173-242 (EGED…EEQK). Position 184 is a phosphotyrosine; by CK2 (tyrosine 184). Residue serine 186 is modified to Phosphoserine; by CK2. The span at 251 to 260 (KSKKEKKRKH) shows a compositional bias: basic residues. A Nuclear localization signal motif is present at residues 256–271 (KKRKHEEKEEEKKAKK). A compositionally biased stretch (basic and acidic residues) spans 261-296 (EEKEEEKKAKKVKKVEFKKDLEEGPTKPKSKKEQDK). The PPIase FKBP-type domain occupies 324–411 (GARVGMRYIG…FDVKLVSMKN (88 aa)).

This sequence belongs to the FKBP-type PPIase family. FKBP3/4 subfamily. In terms of assembly, interacts with NOP53. In terms of processing, phosphorylated at tyrosine and dephosphorylated by the phosphotyrosine-specific phosphoprotein phosphatase PTP1.

The protein resides in the nucleus. It is found in the nucleolus. It catalyses the reaction [protein]-peptidylproline (omega=180) = [protein]-peptidylproline (omega=0). Inhibited by both FK506 and rapamycin. Its function is as follows. Proline isomerase that belongs to an abundant class of enzymes that catalyze the cis-trans isomerization of X-Pro peptide bonds and can accelerate the refolding of proline-containing polypeptides. Specifically binds nuclear localization sequences. May be involved in the assembly or folding of ribosomal proteins. This is Peptidyl-prolyl cis-trans isomerase from Saccharomyces cerevisiae (strain ATCC 204508 / S288c) (Baker's yeast).